The following is a 559-amino-acid chain: Phosphoinositide 3-phosphatase (559 aa).

The region spanning 120 to 541 is the Myotubularin phosphatase domain; sequence SWKSFLLENE…SSLRWWSASF (422 aa). Residue Cys-342 is the Phosphocysteine intermediate of the active site.

Belongs to the protein-tyrosine phosphatase family. Non-receptor class myotubularin subfamily.

It localises to the cytoplasm. It carries out the reaction a 1,2-diacyl-sn-glycero-3-phospho-(1D-myo-inositol-3-phosphate) + H2O = a 1,2-diacyl-sn-glycero-3-phospho-(1D-myo-inositol) + phosphate. In terms of biological role, lipid phosphatase which dephosphorylates phosphatidylinositol 3-monophosphate (PI3P). Involved in the control of PI3P-dependent signaling and in the maintenance of endosomal system integrity. This is Phosphoinositide 3-phosphatase from Schizosaccharomyces pombe (strain 972 / ATCC 24843) (Fission yeast).